Consider the following 239-residue polypeptide: Ribonuclease 3 (239 aa).

Residues 12–137 (REKVEAVIGY…LIAAIYLDAG (126 aa)) form the RNase III domain. Glu-50 is a Mg(2+) binding site. Residue Asp-54 is part of the active site. The Mg(2+) site is built by Asp-123 and Glu-126. Glu-126 is an active-site residue. Residues 162–231 (DAKTELQEWA…ATRLLEREGV (70 aa)) enclose the DRBM domain.

It belongs to the ribonuclease III family. In terms of assembly, homodimer. Mg(2+) is required as a cofactor.

The protein resides in the cytoplasm. It carries out the reaction Endonucleolytic cleavage to 5'-phosphomonoester.. Functionally, digests double-stranded RNA. Involved in the processing of primary rRNA transcript to yield the immediate precursors to the large and small rRNAs (23S and 16S). Processes some mRNAs, and tRNAs when they are encoded in the rRNA operon. Processes pre-crRNA and tracrRNA of type II CRISPR loci if present in the organism. This chain is Ribonuclease 3, found in Allorhizobium ampelinum (strain ATCC BAA-846 / DSM 112012 / S4) (Agrobacterium vitis (strain S4)).